Consider the following 520-residue polypeptide: Bile acid--coenzyme A ligase (520 aa).

The protein belongs to the ATP-dependent AMP-binding enzyme family. In terms of assembly, homodimer. Mg(2+) is required as a cofactor.

It catalyses the reaction cholate + ATP + CoA = choloyl-CoA + AMP + diphosphate. It carries out the reaction deoxycholate + ATP + CoA = deoxycholoyl-CoA + AMP + diphosphate. The catalysed reaction is chenodeoxycholate + ATP + CoA = chenodeoxycholoyl-CoA + AMP + diphosphate. The protein operates within lipid metabolism; bile acid biosynthesis. With respect to regulation, inhibited by diphosphate. Its function is as follows. Functions in the bile acid 7alpha-dehydroxylation pathway, which forms secondary bile acids via the 7alpha-dehydroxylation of primary bile acids, and is carried out by intestinal anaerobic bacteria. Catalyzes the initial step in this pathway, i.e. the ATP-dependent thioesterification of primary bile acids with coenzyme A. Is active with C-24 bile acids with free carboxyl groups such as cholate, deoxycholate and chenodeoxycholate. Produces AMP and pyrophosphate in addition to the bile acid-CoA thioester. This chain is Bile acid--coenzyme A ligase, found in Clostridium scindens (strain JCM 10418 / VPI 12708).